We begin with the raw amino-acid sequence, 513 residues long: ATP synthase subunit alpha (513 aa).

169–176 (GDRQTGKT) serves as a coordination point for ATP.

This sequence belongs to the ATPase alpha/beta chains family. As to quaternary structure, F-type ATPases have 2 components, CF(1) - the catalytic core - and CF(0) - the membrane proton channel. CF(1) has five subunits: alpha(3), beta(3), gamma(1), delta(1), epsilon(1). CF(0) has three main subunits: a(1), b(2) and c(9-12). The alpha and beta chains form an alternating ring which encloses part of the gamma chain. CF(1) is attached to CF(0) by a central stalk formed by the gamma and epsilon chains, while a peripheral stalk is formed by the delta and b chains.

The protein localises to the cell inner membrane. It carries out the reaction ATP + H2O + 4 H(+)(in) = ADP + phosphate + 5 H(+)(out). In terms of biological role, produces ATP from ADP in the presence of a proton gradient across the membrane. The alpha chain is a regulatory subunit. The chain is ATP synthase subunit alpha from Proteus mirabilis (strain HI4320).